The chain runs to 722 residues: Bifunctional UDP-N-acetylglucosamine 2-epimerase/N-acetylmannosamine kinase (722 aa).

UDP-binding residues include Arg-19, Ser-23, Arg-113, His-220, and Asn-253. Residues Lys-259, Glu-271, Lys-280, and His-281 each coordinate CMP-N-acetyl-beta-neuraminate. 5 residues coordinate UDP: Val-282, Ser-301, Ser-302, Glu-307, and Arg-321. The interval 406 to 722 is N-acetylmannosamine kinase; it reads TLSALAVDLG…VLDYTTRRIH (317 aa). Asp-413 is a binding site for Mg(2+). An an N-acyl-D-mannosamine 6-phosphate-binding site is contributed by Gly-416. 3 residues coordinate ADP: Thr-417, Asn-418, and Arg-420. Gly-476, Arg-477, Thr-489, Asn-516, Asp-517, and Gly-545 together coordinate an N-acyl-D-mannosamine 6-phosphate. An N-acyl-D-mannosamine-binding residues include Gly-476, Arg-477, Thr-489, Asn-516, and Asp-517. Asp-517 is a catalytic residue. The an N-acyl-D-mannosamine site is built by Glu-566 and His-569. His-569 is an an N-acyl-D-mannosamine 6-phosphate binding site. 4 residues coordinate Zn(2+): His-569, Cys-579, Cys-581, and Cys-586. Glu-588 is a binding site for an N-acyl-D-mannosamine 6-phosphate. Glu-588 contributes to the an N-acyl-D-mannosamine binding site.

In the N-terminal section; belongs to the UDP-N-acetylglucosamine 2-epimerase family. The protein in the C-terminal section; belongs to the ROK (NagC/XylR) family. As to quaternary structure, homodimer. Homotetramer. Homohexamer. The hexameric form exhibits both enzyme activities, whereas the dimeric form only catalyzes the phosphorylation of N-acyl-D-mannosamine. In terms of processing, phosphorylated. Phosphorylation by PKC activates the UDP-N-acetylglucosamine 2-epimerase activity.

Its subcellular location is the cytoplasm. It is found in the cytosol. The enzyme catalyses UDP-N-acetyl-alpha-D-glucosamine + H2O = aldehydo-N-acetyl-D-mannosamine + UDP + H(+). It catalyses the reaction an N-acyl-D-mannosamine + ATP = an N-acyl-D-mannosamine 6-phosphate + ADP + H(+). It participates in amino-sugar metabolism; N-acetylneuraminate biosynthesis. Its activity is regulated as follows. The UDP-N-acetylglucosamine 2-epimerase activity, in contrast to the N-acetylmannosamine kinase activity, exhibits allosteric regulation by cytidine monophosphate-N-acetylneuraminic acid (CMP-Neu5Ac), the end product of neuraminic acid biosynthesis. Moreover, the activity is contingent upon the oligomeric state of the enzyme. The monomeric form is inactive, while the dimeric form selectively catalyzes the phosphorylation of N-acetylmannosamine. The hexameric form, on the other hand, demonstrates full proficiency in both enzyme activities. Furthermore, the UDP-N-acetylglucosamine 2-epimerase activity is increased by PKC-mediated phosphorylation. Its function is as follows. Bifunctional enzyme that possesses both UDP-N-acetylglucosamine 2-epimerase and N-acetylmannosamine kinase activities, and serves as the initiator of the biosynthetic pathway leading to the production of N-acetylneuraminic acid (NeuAc), a critical precursor in the synthesis of sialic acids. By catalyzing this pivotal and rate-limiting step in sialic acid biosynthesis, this enzyme assumes a pivotal role in governing the regulation of cell surface sialylation, playing a role in embryonic angiogenesis. Sialic acids represent a category of negatively charged sugars that reside on the surface of cells as terminal components of glycoconjugates and mediate important functions in various cellular processes, including cell adhesion, signal transduction, and cellular recognition. This Cricetulus griseus (Chinese hamster) protein is Bifunctional UDP-N-acetylglucosamine 2-epimerase/N-acetylmannosamine kinase (GNE).